We begin with the raw amino-acid sequence, 339 residues long: Cullin-associated NEDD8-dissociated protein 1, N-terminal part (339 aa).

HEAT repeat units lie at residues 5–42 (HTIQQNLNGLLSKLNDPDPDMRYMSLNDLYGILSNPCS) and 50–87 (ASATRLAEGLLKALDDQHGDVQNQALKCLGPLVARLPL).

In terms of assembly, interacts with candA-C. Interacts with unneddylated cullins culA and culD; interaction occurs only when complexed with candA-C.

It localises to the nucleus. Functionally, assembly factor of SCF (SKP1-CUL1-F-box protein) E3 ubiquitin ligase complexes that promotes the exchange of the substrate-recognition F-box subunit in SCF complexes, thereby playing a key role in the cellular repertoire of SCF complexes. Acts as a F-box protein exchange factor when interacting with candA-C. The polypeptide is Cullin-associated NEDD8-dissociated protein 1, N-terminal part (candA-N) (Emericella nidulans (strain FGSC A4 / ATCC 38163 / CBS 112.46 / NRRL 194 / M139) (Aspergillus nidulans)).